Reading from the N-terminus, the 326-residue chain is MAALFPPPPGPRFVLRGTQSAVNTLHFCPPSQAAGNPLLFSGSQNGLVHIWSLQTRRIVTTLNGHGGQGVIWLKTLPQGHQLLSQGRDLRLCLWDLEEGRNTIMDSVQLDSVGFCRGSILVRGQQCWMLAVPGKGSDEVQILEMPSKTSVCTLKPEADARPGMPMCLGLWQTNSSLRPLLLAGYEDGSVTLWDISERKVCSQITCHEEPVMGLDFDSQKAKGISGSAGKVLAVWSLDDQQSLQVKKTHELTNPGIAEVTIRPDHKILATAGWDHRIRVFHWRTMKPLAVLAFHSAPVYCVAFAADGLLAAGSKDQRISIWSLYPCP.

6 WD repeats span residues 17–61, 64–104, 159–202, 205–244, 250–291, and 292–325; these read GTQS…IVTT, GHGG…NTIM, ARPG…VCSQ, CHEEPVMGLDFDSQKAKGISGSAGKVLAVWSLDDQQSLQV, LTNP…AVLA, and FHSAPVYCVAFAADGLLAAGSKDQRISIWSLYPC.

Expressed at low levels in most tissues and highly expressed in adult testis. Widely expressed in adult brain with striking regional distribution in forebrain, midbrain, and hindbrain structures, including the thalamus, hypothalamus, amygdala, hippocampus, pons.

The protein resides in the cytoplasm. The protein localises to the nucleus. Functionally, acts as a critical regulator of DNA damage response (DDR) signaling via specifically regulating phosphatidylinositol 3-kinase-related protein kinase (PIKK) family proteins. The polypeptide is Guanine nucleotide-binding protein subunit beta-like protein 1 (Gnb1l) (Mus musculus (Mouse)).